A 633-amino-acid chain; its full sequence is ATP-dependent zinc metalloprotease FtsH (633 aa).

Residues 1-19 (MTPSNEPGKQDQIPQPGPT) are Cytoplasmic-facing. Residues 20–40 (IPNQYSFLWLSAAIFLMFLWL) traverse the membrane as a helical segment. The Periplasmic segment spans residues 41 to 133 (QGNNQQQQQE…SRSGRPWWQE (93 aa)). The helical transmembrane segment at 134–154 (LILGFLPWILLLALMFWFWGA) threads the bilayer. Residues 155–633 (AQKRMTQGGG…LEEARSRETA (479 aa)) lie on the Cytoplasmic side of the membrane. 226–233 (GPPGTGKT) provides a ligand contact to ATP. A Zn(2+)-binding site is contributed by histidine 447. Glutamate 448 is an active-site residue. Positions 451 and 523 each coordinate Zn(2+).

This sequence in the central section; belongs to the AAA ATPase family. The protein in the C-terminal section; belongs to the peptidase M41 family. In terms of assembly, homohexamer. Zn(2+) serves as cofactor.

It is found in the cell inner membrane. In terms of biological role, acts as a processive, ATP-dependent zinc metallopeptidase for both cytoplasmic and membrane proteins. Plays a role in the quality control of integral membrane proteins. The protein is ATP-dependent zinc metalloprotease FtsH of Marinobacter nauticus (strain ATCC 700491 / DSM 11845 / VT8) (Marinobacter aquaeolei).